We begin with the raw amino-acid sequence, 165 residues long: uncharacterized protein (165 aa).

2 helical membrane passes run 7–27 and 141–161; these read LWLA…QITV and KGTP…IALL.

It is found in the cell membrane. This is an uncharacterized protein from Archaeoglobus fulgidus (strain ATCC 49558 / DSM 4304 / JCM 9628 / NBRC 100126 / VC-16).